The following is a 154-amino-acid chain: Endoribonuclease YbeY (154 aa).

Positions 113, 117, and 123 each coordinate Zn(2+).

This sequence belongs to the endoribonuclease YbeY family. Requires Zn(2+) as cofactor.

The protein localises to the cytoplasm. Functionally, single strand-specific metallo-endoribonuclease involved in late-stage 70S ribosome quality control and in maturation of the 3' terminus of the 16S rRNA. The chain is Endoribonuclease YbeY from Vibrio parahaemolyticus serotype O3:K6 (strain RIMD 2210633).